Consider the following 971-residue polypeptide: Exportin-2 (971 aa).

Methionine 1 is modified (N-acetylmethionine). Positions 29 to 102 constitute an Importin N-terminal domain; the sequence is AEKFLESVEG…KANIVHLMLS (74 aa). Serine 112 carries the post-translational modification Phosphoserine. N6-acetyllysine is present on residues lysine 574 and lysine 824. Serine 931 carries the post-translational modification Phosphoserine.

This sequence belongs to the XPO2/CSE1 family. In terms of assembly, found in a complex with CSE1L/XPO2, Ran and KPNA2. Binds with high affinity to importin-alpha only in the presence of RanGTP. The complex is dissociated by the combined action of RanBP1 and RanGAP1. Interacts with CFTR. In terms of tissue distribution, ubiquitous. Detected in embryos from 5 to 17 dpc. Highly expressed in adult testis, heart, brain, lung, liver, skeletal muscle, spleen and kidney.

The protein resides in the cytoplasm. Its subcellular location is the nucleus. Its function is as follows. Export receptor for importin-alpha. Mediates importin-alpha re-export from the nucleus to the cytoplasm after import substrates (cargos) have been released into the nucleoplasm. In the nucleus binds cooperatively to importin-alpha and to the GTPase Ran in its active GTP-bound form. Docking of this trimeric complex to the nuclear pore complex (NPC) is mediated through binding to nucleoporins. Upon transit of a nuclear export complex into the cytoplasm, disassembling of the complex and hydrolysis of Ran-GTP to Ran-GDP (induced by RANBP1 and RANGAP1, respectively) cause release of the importin-alpha from the export receptor. CSE1L/XPO2 then return to the nuclear compartment and mediate another round of transport. The directionality of nuclear export is thought to be conferred by an asymmetric distribution of the GTP- and GDP-bound forms of Ran between the cytoplasm and nucleus. The sequence is that of Exportin-2 (Cse1l) from Mus musculus (Mouse).